The chain runs to 178 residues: Crossover junction endodeoxyribonuclease RuvC (178 aa).

Catalysis depends on residues Asp11, Glu71, and Asp143. The Mg(2+) site is built by Asp11, Glu71, and Asp143.

The protein belongs to the RuvC family. In terms of assembly, homodimer which binds Holliday junction (HJ) DNA. The HJ becomes 2-fold symmetrical on binding to RuvC with unstacked arms; it has a different conformation from HJ DNA in complex with RuvA. In the full resolvosome a probable DNA-RuvA(4)-RuvB(12)-RuvC(2) complex forms which resolves the HJ. The cofactor is Mg(2+).

It is found in the cytoplasm. It catalyses the reaction Endonucleolytic cleavage at a junction such as a reciprocal single-stranded crossover between two homologous DNA duplexes (Holliday junction).. The RuvA-RuvB-RuvC complex processes Holliday junction (HJ) DNA during genetic recombination and DNA repair. Endonuclease that resolves HJ intermediates. Cleaves cruciform DNA by making single-stranded nicks across the HJ at symmetrical positions within the homologous arms, yielding a 5'-phosphate and a 3'-hydroxyl group; requires a central core of homology in the junction. The consensus cleavage sequence is 5'-(A/T)TT(C/G)-3'. Cleavage occurs on the 3'-side of the TT dinucleotide at the point of strand exchange. HJ branch migration catalyzed by RuvA-RuvB allows RuvC to scan DNA until it finds its consensus sequence, where it cleaves and resolves the cruciform DNA. This Neisseria meningitidis serogroup C / serotype 2a (strain ATCC 700532 / DSM 15464 / FAM18) protein is Crossover junction endodeoxyribonuclease RuvC.